Consider the following 401-residue polypeptide: Cysteine desulfurase CsdA (401 aa).

K222 is modified (N6-(pyridoxal phosphate)lysine). Catalysis depends on C358, which acts as the Cysteine persulfide intermediate.

It belongs to the class-V pyridoxal-phosphate-dependent aminotransferase family. Csd subfamily. Homodimer. Forms a heterodimer with CsdE. Pyridoxal 5'-phosphate is required as a cofactor.

The enzyme catalyses (sulfur carrier)-H + L-cysteine = (sulfur carrier)-SH + L-alanine. It catalyses the reaction L-selenocysteine + AH2 = hydrogenselenide + L-alanine + A + H(+). The catalysed reaction is 3-sulfino-L-alanine + H2O = sulfite + L-alanine + H(+). With respect to regulation, cysteine desulfurase activity is increased 2-fold in the presence of CsdE. Its function is as follows. Catalyzes the removal of elemental sulfur and selenium atoms from L-cysteine, L-cystine, L-selenocysteine, and L-selenocystine to produce L-alanine, and transiently retains the released sulfur atom on a cysteine residue, in the form of a persulfide. Can also desulfinate L-cysteine sulfinate (3-sulfino-L-alanine), which is the best substrate of the enzyme. Functions as a selenium delivery protein in the pathway for the biosynthesis of selenophosphate. Seems to participate in Fe/S biogenesis by recruiting the SufBCD-SufE proteins. Transfers sulfur to CsdE that increases the cysteine desulfurase activity of CsdA. Can also transfer sulfur directly to TcdA/CsdL in vitro. Appears to support the function of TcdA in the generation of cyclic threonylcarbamoyladenosine at position 37 (ct(6)A37) in tRNAs that read codons beginning with adenine. The polypeptide is Cysteine desulfurase CsdA (csdA) (Escherichia coli (strain K12)).